The primary structure comprises 423 residues: Glucose-1-phosphate adenylyltransferase (423 aa).

Residues Y112, G177, 192–193 (EK), and S210 contribute to the alpha-D-glucose 1-phosphate site.

The protein belongs to the bacterial/plant glucose-1-phosphate adenylyltransferase family. Homotetramer.

The catalysed reaction is alpha-D-glucose 1-phosphate + ATP + H(+) = ADP-alpha-D-glucose + diphosphate. The protein operates within glycan biosynthesis; glycogen biosynthesis. Involved in the biosynthesis of ADP-glucose, a building block required for the elongation reactions to produce glycogen. Catalyzes the reaction between ATP and alpha-D-glucose 1-phosphate (G1P) to produce pyrophosphate and ADP-Glc. This is Glucose-1-phosphate adenylyltransferase from Rhodospirillum rubrum (strain ATCC 11170 / ATH 1.1.1 / DSM 467 / LMG 4362 / NCIMB 8255 / S1).